The following is a 283-amino-acid chain: Ribosomal RNA small subunit methyltransferase A (283 aa).

S-adenosyl-L-methionine contacts are provided by Asn-22, Leu-24, Gly-49, Glu-70, and Asn-113.

Belongs to the class I-like SAM-binding methyltransferase superfamily. rRNA adenine N(6)-methyltransferase family. RsmA subfamily.

The protein resides in the cytoplasm. The catalysed reaction is adenosine(1518)/adenosine(1519) in 16S rRNA + 4 S-adenosyl-L-methionine = N(6)-dimethyladenosine(1518)/N(6)-dimethyladenosine(1519) in 16S rRNA + 4 S-adenosyl-L-homocysteine + 4 H(+). Specifically dimethylates two adjacent adenosines (A1518 and A1519) in the loop of a conserved hairpin near the 3'-end of 16S rRNA in the 30S particle. May play a critical role in biogenesis of 30S subunits. The sequence is that of Ribosomal RNA small subunit methyltransferase A from Myxococcus xanthus (strain DK1622).